The chain runs to 462 residues: MDPTDLAFAGAAAQARMLADGALTAPMLLEVYLQRIERLDSHLRAYRVVQFDRARAEAEAAQQRLDAGERLPLLGVPIAIKDDVDIAGEVTTYGSAGHGPAATSDAEVVRRLRAAGAVIIGKTNVPELMIMPFTESLAFGATRNPWCLNRTPGGSSGGSAAAVAAGLAPVALGSDGGGSIRIPCTWCGLFGLKPQRDRISLEPHDGAWQGLSVNGPIARSVMDAALLLDATTTVPGPEGEFVAAAARQPGRLRIALSTRVPTPLPVRCGKQELAAVHQAGALLRDLGHDVVVRDPDYPASTYANYLPRFFRGISDDADAQAHPDRLEARTRAIARLGSFFSDRRMAALRAAEVVLSSRIQSIFDDVDVVVTPGAATGPSRIGAYQRRGAVSTLLLVVQRVPYFQVWNLTGQPAAVVPWDFDGDGLPMSVQLVGRPYDEATLLALAAQIESARPWAHRRPSVS.

Residues Lys-81 and Ser-155 each act as charge relay system in the active site. The active-site Acyl-ester intermediate is Ser-179.

The protein belongs to the amidase family.

The enzyme catalyses a monocarboxylic acid amide + H2O = a monocarboxylate + NH4(+). The sequence is that of Putative amidase AmiB2 (amiB2) from Mycobacterium bovis (strain ATCC BAA-935 / AF2122/97).